A 413-amino-acid polypeptide reads, in one-letter code: Peptidase T (413 aa).

His-84 serves as a coordination point for Zn(2+). The active site involves Asp-86. Residue Asp-146 participates in Zn(2+) binding. The Proton acceptor role is filled by Glu-180. Residues Glu-181, Asp-203, and His-385 each coordinate Zn(2+).

The protein belongs to the peptidase M20B family. It depends on Zn(2+) as a cofactor.

It is found in the cytoplasm. The catalysed reaction is Release of the N-terminal residue from a tripeptide.. Its function is as follows. Cleaves the N-terminal amino acid of tripeptides. The protein is Peptidase T of Limosilactobacillus fermentum (strain NBRC 3956 / LMG 18251) (Lactobacillus fermentum).